A 147-amino-acid polypeptide reads, in one-letter code: D-aminoacyl-tRNA deacylase (147 aa).

A Gly-cisPro motif, important for rejection of L-amino acids motif is present at residues 136-137 (GP).

It belongs to the DTD family. As to quaternary structure, homodimer.

It localises to the cytoplasm. The catalysed reaction is glycyl-tRNA(Ala) + H2O = tRNA(Ala) + glycine + H(+). The enzyme catalyses a D-aminoacyl-tRNA + H2O = a tRNA + a D-alpha-amino acid + H(+). An aminoacyl-tRNA editing enzyme that deacylates mischarged D-aminoacyl-tRNAs. Also deacylates mischarged glycyl-tRNA(Ala), protecting cells against glycine mischarging by AlaRS. Acts via tRNA-based rather than protein-based catalysis; rejects L-amino acids rather than detecting D-amino acids in the active site. By recycling D-aminoacyl-tRNA to D-amino acids and free tRNA molecules, this enzyme counteracts the toxicity associated with the formation of D-aminoacyl-tRNA entities in vivo and helps enforce protein L-homochirality. This chain is D-aminoacyl-tRNA deacylase, found in Streptococcus thermophilus (strain CNRZ 1066).